The sequence spans 278 residues: MRSSLLLLVFFLSIGWARYCVHNEKSWCQGHNIWGWCFHNKSSGVFNCDDNAFCVSQEQLKNKKSSGCFLRDNSSICCCNDADGCNLGFIGVQPKYAHGQQCTNSMEVPNEDIRQFRPCDDPFCYSVLTAEDDGGPTTVTRGCHSRKMVMHHMSKNEDDKYQNNTKWRETKQIAEMPSCAEILKDQPKVNGTTSMCVDFTYDQEAEDGEEVDEPIKMKGRLCCCAGSNKCNEHAMWADEGISLTEMLEEIEARKVPVDSSAPVNIILSIAFSIFLIHF.

The first 17 residues, 1 to 17 (MRSSLLLLVFFLSIGWA), serve as a signal peptide directing secretion. Residues 18 to 254 (RYCVHNEKSW…EMLEEIEARK (237 aa)) lie on the Extracellular side of the membrane. 4 N-linked (GlcNAc...) asparagine glycosylation sites follow: N40, N73, N163, and N190. A helical membrane pass occupies residues 255 to 271 (VPVDSSAPVNIILSIAF). Residues 272 to 278 (SIFLIHF) are Cytoplasmic-facing.

Its subcellular location is the cell membrane. Functionally, plays a role in mechanosensory transduction (touch sensitivity). In Caenorhabditis elegans, this protein is Protein mtd-1.